Consider the following 203-residue polypeptide: High frequency lysogenization protein HflD homolog (203 aa).

It belongs to the HflD family.

Its subcellular location is the cytoplasm. The protein resides in the cell inner membrane. This chain is High frequency lysogenization protein HflD homolog, found in Pasteurella multocida (strain Pm70).